Reading from the N-terminus, the 739-residue chain is Phosphoribosylformylglycinamidine synthase subunit PurL (739 aa).

The active site involves His-53. Positions 56 and 95 each coordinate ATP. Glu-97 is a Mg(2+) binding site. Residues 98-101 and Arg-120 contribute to the substrate site; that span reads SHNH. His-99 (proton acceptor) is an active-site residue. Asp-121 contributes to the Mg(2+) binding site. Gln-244 lines the substrate pocket. Residue Asp-274 participates in Mg(2+) binding. 318 to 320 contacts substrate; it reads ESQ. 2 residues coordinate ATP: Asp-501 and Gly-538. Asn-539 serves as a coordination point for Mg(2+). Ser-541 provides a ligand contact to substrate.

This sequence belongs to the FGAMS family. Monomer. Part of the FGAM synthase complex composed of 1 PurL, 1 PurQ and 2 PurS subunits.

The protein resides in the cytoplasm. The enzyme catalyses N(2)-formyl-N(1)-(5-phospho-beta-D-ribosyl)glycinamide + L-glutamine + ATP + H2O = 2-formamido-N(1)-(5-O-phospho-beta-D-ribosyl)acetamidine + L-glutamate + ADP + phosphate + H(+). It participates in purine metabolism; IMP biosynthesis via de novo pathway; 5-amino-1-(5-phospho-D-ribosyl)imidazole from N(2)-formyl-N(1)-(5-phospho-D-ribosyl)glycinamide: step 1/2. Part of the phosphoribosylformylglycinamidine synthase complex involved in the purines biosynthetic pathway. Catalyzes the ATP-dependent conversion of formylglycinamide ribonucleotide (FGAR) and glutamine to yield formylglycinamidine ribonucleotide (FGAM) and glutamate. The FGAM synthase complex is composed of three subunits. PurQ produces an ammonia molecule by converting glutamine to glutamate. PurL transfers the ammonia molecule to FGAR to form FGAM in an ATP-dependent manner. PurS interacts with PurQ and PurL and is thought to assist in the transfer of the ammonia molecule from PurQ to PurL. This Listeria monocytogenes serovar 1/2a (strain ATCC BAA-679 / EGD-e) protein is Phosphoribosylformylglycinamidine synthase subunit PurL.